A 379-amino-acid polypeptide reads, in one-letter code: MPTAFPEDSVGLVSPQVFRFSEPLALACGRSLAEYELVVETYGELNAARSNAVLICHALSGHHHAAGYHSPNDRKPGWWDSCIGPGKPIDTNKFFVVSLNNLGGCNGSTGPSSANPATGKPYGADFPVMTVEDWVHSQARLADVLGIEQWAAVIGGSLGGMQALQWSISYPERVRHCLAIASAPKLSAQNIAFNEVARQAILTDPEFHGGHFQERGVIPKRGLMLARMVGHITYLSDDAMGEKFGRGLKSEKLNYDFHSVEFQVESYLRYQGEEFSGRFDANTYLLMTKALDYFDPAAAHDGDLARTLAVAKADFCLMSFTTDWRFSPARSREIVDALTAAKKNVCYLEIDAPQGHDAFLMPIPRYLQAFGSYMKRIEV.

Residues 51–360 form the AB hydrolase-1 domain; that stretch reads NAVLICHALS…DAPQGHDAFL (310 aa). Catalysis depends on Ser157, which acts as the Nucleophile. Residue Arg227 participates in substrate binding. Residues Asp323 and His356 contribute to the active site. A substrate-binding site is contributed by Asp357.

The protein belongs to the AB hydrolase superfamily. MetX family. As to quaternary structure, homodimer.

The protein resides in the cytoplasm. The catalysed reaction is L-homoserine + succinyl-CoA = O-succinyl-L-homoserine + CoA. It participates in amino-acid biosynthesis; L-methionine biosynthesis via de novo pathway; O-succinyl-L-homoserine from L-homoserine: step 1/1. In terms of biological role, transfers a succinyl group from succinyl-CoA to L-homoserine, forming succinyl-L-homoserine. This is Homoserine O-succinyltransferase from Ectopseudomonas mendocina (strain ymp) (Pseudomonas mendocina).